Consider the following 296-residue polypeptide: UDP-N-acetylenolpyruvoylglucosamine reductase (296 aa).

In terms of domain architecture, FAD-binding PCMH-type spans 19–203; that stretch reads KVGGFAEYFS…LETTQKNLKK (185 aa). R166 is an active-site residue. Catalysis depends on S217, which acts as the Proton donor. E287 is a catalytic residue.

The protein belongs to the MurB family. Requires FAD as cofactor.

The protein resides in the cytoplasm. The enzyme catalyses UDP-N-acetyl-alpha-D-muramate + NADP(+) = UDP-N-acetyl-3-O-(1-carboxyvinyl)-alpha-D-glucosamine + NADPH + H(+). The protein operates within cell wall biogenesis; peptidoglycan biosynthesis. Its function is as follows. Cell wall formation. The chain is UDP-N-acetylenolpyruvoylglucosamine reductase from Prochlorococcus marinus subsp. pastoris (strain CCMP1986 / NIES-2087 / MED4).